The following is a 576-amino-acid chain: Putative diflavin flavoprotein A 1 (576 aa).

A zinc metallo-hydrolase region spans residues 48 to 240 (RNGTTYNSFL…LAIKTVATGH (193 aa)). Residues His97, Glu99, Asp101, His164, Asp183, and His240 each coordinate Fe cation. Residues 269-431 (VALFYAEDYG…DLEKALGRIS (163 aa)) form the Flavodoxin-like domain. The tract at residues 432–576 (TGLYIITTKK…VHHRKVGNHY (145 aa)) is flavodoxin-reductase-like.

This sequence in the N-terminal section; belongs to the zinc metallo-hydrolase group 3 family. It in the C-terminal section; belongs to the flavodoxin reductase family. The cofactor is Fe cation.

In terms of biological role, mediates electron transfer from NADH to oxygen, reducing it to water. This modular protein has 3 redox cofactors, in other organisms the same activity requires 2 or 3 proteins. The chain is Putative diflavin flavoprotein A 1 (dfa1) from Nostoc sp. (strain PCC 7120 / SAG 25.82 / UTEX 2576).